We begin with the raw amino-acid sequence, 248 residues long: 4-hydroxy-tetrahydrodipicolinate reductase (248 aa).

Residues G8 to V13, D34, G76 to T78, and A103 to F106 each bind NAD(+). Residue H133 is the Proton donor/acceptor of the active site. H134 is a (S)-2,3,4,5-tetrahydrodipicolinate binding site. K137 serves as the catalytic Proton donor. A (S)-2,3,4,5-tetrahydrodipicolinate-binding site is contributed by G143–T144.

Belongs to the DapB family.

It is found in the cytoplasm. It carries out the reaction (S)-2,3,4,5-tetrahydrodipicolinate + NAD(+) + H2O = (2S,4S)-4-hydroxy-2,3,4,5-tetrahydrodipicolinate + NADH + H(+). The catalysed reaction is (S)-2,3,4,5-tetrahydrodipicolinate + NADP(+) + H2O = (2S,4S)-4-hydroxy-2,3,4,5-tetrahydrodipicolinate + NADPH + H(+). Its pathway is amino-acid biosynthesis; L-lysine biosynthesis via DAP pathway; (S)-tetrahydrodipicolinate from L-aspartate: step 4/4. Its function is as follows. Catalyzes the conversion of 4-hydroxy-tetrahydrodipicolinate (HTPA) to tetrahydrodipicolinate. In Corynebacterium urealyticum (strain ATCC 43042 / DSM 7109), this protein is 4-hydroxy-tetrahydrodipicolinate reductase.